A 196-amino-acid polypeptide reads, in one-letter code: Pro-FMRFamide-related neuropeptide VF (196 aa).

The N-terminal stretch at 1 to 21 (MEIISLKRFILLMLATSSLLT) is a signal peptide. The propeptide occupies 22 to 57 (SNIFCTDESRIPSLYSKKNYDKYSEPRGDLGWEKER). Phe-92 carries the phenylalanine amide modification. 2 propeptides span residues 95–99 (NMEEE) and 115–121 (NREDSLS). Phenylalanine amide is present on Phe-131. The propeptide occupies 134-196 (TIAAKSITKT…IDDAELKQEK (63 aa)).

Belongs to the FARP (FMRFamide related peptide) family. As to expression, expressed in hypothalamus, where it is localized to the dorsomedial hypothalamic nucleus (DMH), paraventricular nucleus (PVN), and to neuronal projections from the PVN to the neurosecretory zone of the median eminence.

It localises to the secreted. In terms of biological role, may act in concert with kisspeptin, through opposing affects, to regulate the activity of gonadotropin-releasing hormone (GnRH) neurons across the seasons, leading to an annual change in fertility and the cyclical seasonal transition from non-breeding to breeding season. Efficiently inhibits forskolin-induced production of cAMP. Acts as a potent negative regulator of gonadotropin synthesis and secretion. Induces secretion of prolactin. Its function is as follows. Efficiently inhibits forskolin-induced production of cAMP. Blocks morphine-induced analgesia. Functionally, shows no inhibitory activity of forskolin-induced production of cAMP. The protein is Pro-FMRFamide-related neuropeptide VF of Ovis aries (Sheep).